A 318-amino-acid polypeptide reads, in one-letter code: Thymidylate synthase (318 aa).

DUMP-binding positions include Arg-25 and 180 to 181 (RR). Catalysis depends on Cys-200, which acts as the Nucleophile. DUMP contacts are provided by residues 220–223 (RSGD), Asn-231, and 261–263 (HIY). A (6R)-5,10-methylene-5,6,7,8-tetrahydrofolate-binding site is contributed by Asp-223. Ala-317 contacts (6R)-5,10-methylene-5,6,7,8-tetrahydrofolate.

This sequence belongs to the thymidylate synthase family. Bacterial-type ThyA subfamily. Homodimer.

It is found in the cytoplasm. The catalysed reaction is dUMP + (6R)-5,10-methylene-5,6,7,8-tetrahydrofolate = 7,8-dihydrofolate + dTMP. It participates in pyrimidine metabolism; dTTP biosynthesis. Functionally, catalyzes the reductive methylation of 2'-deoxyuridine-5'-monophosphate (dUMP) to 2'-deoxythymidine-5'-monophosphate (dTMP) while utilizing 5,10-methylenetetrahydrofolate (mTHF) as the methyl donor and reductant in the reaction, yielding dihydrofolate (DHF) as a by-product. This enzymatic reaction provides an intracellular de novo source of dTMP, an essential precursor for DNA biosynthesis. In Lactobacillus acidophilus (strain ATCC 700396 / NCK56 / N2 / NCFM), this protein is Thymidylate synthase.